We begin with the raw amino-acid sequence, 163 residues long: Large ribosomal subunit protein uL10 (163 aa).

This sequence belongs to the universal ribosomal protein uL10 family. Part of the ribosomal stalk of the 50S ribosomal subunit. The N-terminus interacts with L11 and the large rRNA to form the base of the stalk. The C-terminus forms an elongated spine to which L12 dimers bind in a sequential fashion forming a multimeric L10(L12)X complex.

In terms of biological role, forms part of the ribosomal stalk, playing a central role in the interaction of the ribosome with GTP-bound translation factors. In Pasteurella multocida (strain Pm70), this protein is Large ribosomal subunit protein uL10 (rplJ).